Reading from the N-terminus, the 304-residue chain is Glycine--tRNA ligase alpha subunit (304 aa).

Belongs to the class-II aminoacyl-tRNA synthetase family. In terms of assembly, tetramer of two alpha and two beta subunits.

It localises to the cytoplasm. It catalyses the reaction tRNA(Gly) + glycine + ATP = glycyl-tRNA(Gly) + AMP + diphosphate. This Streptococcus agalactiae serotype III (strain NEM316) protein is Glycine--tRNA ligase alpha subunit.